The following is a 360-amino-acid chain: Phospho-N-acetylmuramoyl-pentapeptide-transferase (360 aa).

A run of 10 helical transmembrane segments spans residues 16 to 36, 73 to 93, 97 to 117, 134 to 154, 168 to 188, 199 to 219, 236 to 256, 263 to 283, 288 to 308, and 338 to 358; these read FAVFQYLTLRGILGVLTALVL, TMGGALILSSIGVSTLLWADL, YVWVVLLVTLLFGAIGWVDDY, YFWQSVFGLGAAIFLYMTAST, YSIPLGAGFIVLTYFVIVGSS, GLAIMPTVMVGGGLGIFCYLS, AGELIVFCGALIGAGLGFLWF, VFMGDVGALALGAALGTIAVI, IVLFIMGGVFVMETLSVVIQV, and VIVRFWIITVILVLIGLATLK.

Belongs to the glycosyltransferase 4 family. MraY subfamily. Mg(2+) serves as cofactor.

The protein resides in the cell inner membrane. It catalyses the reaction UDP-N-acetyl-alpha-D-muramoyl-L-alanyl-gamma-D-glutamyl-meso-2,6-diaminopimeloyl-D-alanyl-D-alanine + di-trans,octa-cis-undecaprenyl phosphate = di-trans,octa-cis-undecaprenyl diphospho-N-acetyl-alpha-D-muramoyl-L-alanyl-D-glutamyl-meso-2,6-diaminopimeloyl-D-alanyl-D-alanine + UMP. It functions in the pathway cell wall biogenesis; peptidoglycan biosynthesis. In terms of biological role, catalyzes the initial step of the lipid cycle reactions in the biosynthesis of the cell wall peptidoglycan: transfers peptidoglycan precursor phospho-MurNAc-pentapeptide from UDP-MurNAc-pentapeptide onto the lipid carrier undecaprenyl phosphate, yielding undecaprenyl-pyrophosphoryl-MurNAc-pentapeptide, known as lipid I. The polypeptide is Phospho-N-acetylmuramoyl-pentapeptide-transferase (Pseudomonas fluorescens (strain Pf0-1)).